The chain runs to 191 residues: Cell division protein SepF (191 aa).

Residues serine 151–glutamate 165 show a composition bias toward low complexity. The tract at residues serine 151–serine 191 is disordered. Polar residues predominate over residues asparagine 166–proline 178.

Belongs to the SepF family. In terms of assembly, homodimer. Interacts with FtsZ.

Its subcellular location is the cytoplasm. Functionally, cell division protein that is part of the divisome complex and is recruited early to the Z-ring. Probably stimulates Z-ring formation, perhaps through the cross-linking of FtsZ protofilaments. Its function overlaps with FtsA. The polypeptide is Cell division protein SepF (Prochlorococcus marinus (strain MIT 9215)).